The primary structure comprises 200 residues: Small ribosomal subunit protein uS4 (200 aa).

The interval 22–42 (TGKELEKRPYAPGPHGPNQRK) is disordered. Residues 92-152 (ARLDNLVYRM…EKSNNLVVVK (61 aa)) enclose the S4 RNA-binding domain.

Belongs to the universal ribosomal protein uS4 family. As to quaternary structure, part of the 30S ribosomal subunit. Contacts protein S5. The interaction surface between S4 and S5 is involved in control of translational fidelity.

In terms of biological role, one of the primary rRNA binding proteins, it binds directly to 16S rRNA where it nucleates assembly of the body of the 30S subunit. With S5 and S12 plays an important role in translational accuracy. The polypeptide is Small ribosomal subunit protein uS4 (Bacillus cereus (strain Q1)).